The sequence spans 385 residues: Calcium/calmodulin-dependent protein kinase type 1D (385 aa).

The region spanning 23-279 (FEFKETLGTG…CEQAARHPWI (257 aa)) is the Protein kinase domain. ATP is bound by residues 29–37 (LGTGAFSEV) and K52. Residue K113 forms a Glycyl lysine isopeptide (Lys-Gly) (interchain with G-Cter in SUMO2) linkage. At S122 the chain carries Phosphoserine. Catalysis depends on D144, which acts as the Proton acceptor. T180 bears the Phosphothreonine; by CaMKK1 and CaMKK2 mark. Residues 279 to 319 (IAGDTALSKNIHESVSAQIRKNFAKSKWRQAFNATAVVRHM) are autoinhibitory domain. Residues 299–320 (KNFAKSKWRQAFNATAVVRHMR) form a calmodulin-binding region. The Nuclear export signal motif lies at 318–324 (HMRRLQL). The interval 363–385 (VAGVGAERRPRPTTVTTGHTGSK) is disordered. Residues 375–385 (TTVTTGHTGSK) show a composition bias toward polar residues.

This sequence belongs to the protein kinase superfamily. CAMK Ser/Thr protein kinase family. CaMK subfamily. Expressed ubiquitously with high levels in brain and low levels in kidney. Isoform 2 is highly expressed in brain compared to other tissues. In hematopoietic cell lines predominant expression was detected in T and EC cells.

Its subcellular location is the cytoplasm. It localises to the nucleus. The catalysed reaction is L-seryl-[protein] + ATP = O-phospho-L-seryl-[protein] + ADP + H(+). It catalyses the reaction L-threonyl-[protein] + ATP = O-phospho-L-threonyl-[protein] + ADP + H(+). With respect to regulation, activated by Ca(2+)/calmodulin. Binding of calmodulin results in conformational change that relieves intrasteric autoinhibition and allows phosphorylation of Thr-180 within the activation loop by CaMKK1 or CaMKK2. Phosphorylation of Thr-180 results in several fold increase in total activity. Unlike CaMK4, may be unable to exhibit autonomous activity after Ca(2+)/calmodulin activation. In terms of biological role, calcium/calmodulin-dependent protein kinase that operates in the calcium-triggered CaMKK-CaMK1 signaling cascade and, upon calcium influx, activates CREB-dependent gene transcription, regulates calcium-mediated granulocyte function and respiratory burst and promotes basal dendritic growth of hippocampal neurons. In neutrophil cells, required for cytokine-induced proliferative responses and activation of the respiratory burst. Activates the transcription factor CREB1 in hippocampal neuron nuclei. May play a role in apoptosis of erythroleukemia cells. In vitro, phosphorylates transcription factor CREM isoform Beta. Isoform 1 but not isoform 2 activates CREB1. The polypeptide is Calcium/calmodulin-dependent protein kinase type 1D (Camk1d) (Mus musculus (Mouse)).